The following is a 360-amino-acid chain: MQFLGRSISKSIRPSLNSTARKSWVLSSQQFLSTSSTESSSRTRGGGGGNRAEKSSEEWPRPMEVPYQPKIANSIDLIGYVHQPVQFDSTLDGKFWAGTVISHEPSSDSKSESDSSSNFWIPVLFEGDLAHTANSYLKKNDRVHITGQILGDVIQSGANSDQAHVQLFKSFHGSFSHQVMVRDLHYIEGSKAMPKVLPTLDQNEGVLKHSASVQRGREFGTNLWFDLVDKPNEWCDYREMKQNGSVNPKHPDFKKKDGSQALWLNNAPTEILSELKDVKFDIPKYAKQPKAGEESWKDLVDNMNKWWDNRVDKRTPKSPDFKHKETGVGLWLSDSPSWVLEKLPPPKSKTSDIYGVQEMF.

A chloroplast-targeting transit peptide spans 1-61 (MQFLGRSISK…AEKSSEEWPR (61 aa)). The tract at residues 28-64 (SQQFLSTSSTESSSRTRGGGGGNRAEKSSEEWPRPME) is disordered. Residues 33-43 (STSSTESSSRT) show a composition bias toward low complexity. Over residues 51–61 (RAEKSSEEWPR) the composition is skewed to basic and acidic residues. In terms of domain architecture, SSB spans 71-188 (IANSIDLIGY…VMVRDLHYIE (118 aa)). 2 PDF region regions span residues 224 to 276 (WFDL…SELK) and 296 to 344 (WKDL…EKLP).

It localises to the plastid. The protein resides in the chloroplast. Its function is as follows. Binds single-stranded DNA. The sequence is that of Protein OSB4, chloroplastic (OSB4) from Arabidopsis thaliana (Mouse-ear cress).